The following is a 976-amino-acid chain: Serine/threonine-protein kinase CLA4 (976 aa).

The segment at 1–46 (MTSIYTSDLKNHRRAPPPPNGAAGSGSGSSSGSGSGSGSGSGSGSL) is disordered. Over residues 23-43 (AGSGSGSSSGSGSGSGSGSGS) the composition is skewed to gly residues. A PH domain is found at 73-184 (SKRQSGWVHV…WLDAFTTKCP (112 aa)). Residues 207-231 (LTNGSLNGNSSSSPTSGLSSSSVLT) are disordered. The 14-residue stretch at 237–250 (VSGPINFTHKVHVG) folds into the CRIB domain. 2 disordered regions span residues 298–522 (GGNS…KIHP) and 559–658 (SKKS…QLKK). Low complexity-rich tracts occupy residues 313 to 332 (NSKT…AKNN) and 371 to 411 (LNGS…PLNN). The segment covering 430–440 (SGTSSDTYSNK) has biased composition (polar residues). The span at 441–455 (NHQDRSGYEQQRQQR) shows a compositional bias: basic and acidic residues. Positions 456 to 487 (TDSSQQQQQQQKQHQYQQKSQQQQQQPLSSHQ) are enriched in low complexity. Residues 496–505 (QVPPTLPSSG) are compositionally biased toward pro residues. Residues 559–583 (SKKSQQQLASKQPSPPSSQQQQQKP) show a composition bias toward low complexity. Over residues 622–635 (NETSGVSKTPSPTD) the composition is skewed to polar residues. The Protein kinase domain occupies 685–940 (FRIVEKAGQG…TDELLEHSFI (256 aa)). ATP contacts are provided by residues 691–699 (AGQGASGNV) and Lys715. Catalysis depends on Asp808, which acts as the Proton acceptor.

The protein belongs to the protein kinase superfamily. STE Ser/Thr protein kinase family. STE20 subfamily. As to quaternary structure, interacts (via the CRIB domain) with CDC42.

It carries out the reaction L-seryl-[protein] + ATP = O-phospho-L-seryl-[protein] + ADP + H(+). The enzyme catalyses L-threonyl-[protein] + ATP = O-phospho-L-threonyl-[protein] + ADP + H(+). Its function is as follows. Ser/Thr kinase required for wild-type filamentous growth, chlamydospore formation, and virulence in mouse systemic infection. This chain is Serine/threonine-protein kinase CLA4 (CLA4), found in Candida albicans (strain SC5314 / ATCC MYA-2876) (Yeast).